A 725-amino-acid chain; its full sequence is Eukaryotic elongation factor 2 kinase (725 aa).

Over residues 1–12 (MADEDLIFRLEG) the composition is skewed to basic and acidic residues. The segment at 1-38 (MADEDLIFRLEGVDGGQSPRAGHDGDSDGDSDDEEGYF) is disordered. Position 2 is an N-acetylalanine (A2). A phosphoserine mark is found at S18 and S27. The span at 27–36 (SDGDSDDEEG) shows a compositional bias: acidic residues. Phosphoserine; by autocatalysis occurs at positions 61 and 66. A phosphoserine mark is found at S70, S71, S72, and S74. Residue S78 is modified to Phosphoserine; by autocatalysis and TRPM7. The calmodulin-binding stretch occupies residues 81–94 (FKEAWKHAIQKAKH). In terms of domain architecture, Alpha-type protein kinase spans 116 to 326 (RYNAVTGEWL…ICESMGLAPF (211 aa)). S243 bears the Phosphoserine mark. 296-302 (GDGNLGV) provides a ligand contact to ATP. A phosphothreonine; by autocatalysis mark is found at T348 and T353. Disordered regions lie at residues 352-405 (GTEE…PHSQ) and 423-477 (SRDH…SLGS). S359 bears the Phosphoserine; by MAPK13 and CDK1 mark. Positions 363 to 377 (RTLSGSRPPLLRPLS) are enriched in low complexity. S366 is modified (phosphoserine; by autocatalysis, RPS6KA1 and RPS6KB1). A compositionally biased stretch (polar residues) spans 386-404 (SDVTFDSLPSSPSSATPHS). Phosphoserine is present on S392. The residue at position 398 (S398) is a Phosphoserine; by AMPK. 2 stretches are compositionally biased toward basic and acidic residues: residues 423–436 (SRDHDHLDNHRESE) and 445–469 (SEKRGELDDPEPREHGHSYSNRKYE). At S435 the chain carries Phosphoserine. The residue at position 445 (S445) is a Phosphoserine; by autocatalysis. S470 carries the post-translational modification Phosphoserine. A Phosphoserine; by autocatalysis modification is found at S474. A Phosphoserine modification is found at S477. S491 carries the phosphoserine; by autocatalysis modification. S500 is modified (phosphoserine; by PKA).

It belongs to the protein kinase superfamily. Alpha-type protein kinase family. As to quaternary structure, monomer or homodimer. Interacts with Calmodulin/CALM1; this interaction is strictly required for phosphorylation activity. Autophosphorylated at multiple residues, Thr-348 being the major site. Phosphorylated by AMP-activated protein kinase AMPK at Ser-398 leading to EEF2K activation and protein synthesis inhibition. Phosphorylated by TRPM7 at Ser-78 resulting in improved protein stability, higher EE2F phosphorylated and subsequently reduced rate of protein synthesis. Phosphorylation by other kinases such as CDK1 and MAPK13 at Ser-359 or RPS6KA1 and RPS6KB1 at Ser-366 instead decrease EEF2K activity and promote protein synthesis.

The catalysed reaction is [translation elongation factor 2] + ATP = [translation elongation factor 2]-phosphate + ADP + H(+). Undergoes calcium/calmodulin-dependent intramolecular autophosphorylation, and this results in it becoming partially calcium/calmodulin-independent. In terms of biological role, threonine kinase that regulates protein synthesis by controlling the rate of peptide chain elongation. Upon activation by a variety of upstream kinases including AMPK or TRPM7, phosphorylates the elongation factor EEF2 at a single site, renders it unable to bind ribosomes and thus inactive. In turn, the rate of protein synthesis is reduced. The chain is Eukaryotic elongation factor 2 kinase (EEF2K) from Homo sapiens (Human).